A 198-amino-acid polypeptide reads, in one-letter code: Imidazoleglycerol-phosphate dehydratase (198 aa).

The protein belongs to the imidazoleglycerol-phosphate dehydratase family.

The protein resides in the cytoplasm. The catalysed reaction is D-erythro-1-(imidazol-4-yl)glycerol 3-phosphate = 3-(imidazol-4-yl)-2-oxopropyl phosphate + H2O. Its pathway is amino-acid biosynthesis; L-histidine biosynthesis; L-histidine from 5-phospho-alpha-D-ribose 1-diphosphate: step 6/9. This is Imidazoleglycerol-phosphate dehydratase from Gluconobacter oxydans (strain 621H) (Gluconobacter suboxydans).